Here is a 92-residue protein sequence, read N- to C-terminus: Protein RESPONSE TO LOW SULFUR 4 (92 aa).

Positions 8–63 (VMVAASEVEELRQKNGEMEKAVEEMRKEMLQLWRRTQVAEEAEEHLCSQLAELEAE) form a coiled coil.

In terms of biological role, required for flower development in short-day conditions. The chain is Protein RESPONSE TO LOW SULFUR 4 from Arabidopsis thaliana (Mouse-ear cress).